The primary structure comprises 238 residues: Ribosomal RNA small subunit methyltransferase G (238 aa).

S-adenosyl-L-methionine-binding positions include glycine 77, phenylalanine 82, 128–129 (AE), and arginine 147.

This sequence belongs to the methyltransferase superfamily. RNA methyltransferase RsmG family.

The protein resides in the cytoplasm. Its function is as follows. Specifically methylates the N7 position of guanine in position 535 of 16S rRNA. The protein is Ribosomal RNA small subunit methyltransferase G of Listeria monocytogenes serotype 4b (strain F2365).